The sequence spans 295 residues: Energy-coupling factor transporter ATP-binding protein EcfA2 (295 aa).

The region spanning 3 to 246 (ITFKQVDFTY…PAWLTAHQLG (244 aa)) is the ABC transporter domain. 40 to 47 (GHTGSGKS) serves as a coordination point for ATP.

The protein belongs to the ABC transporter superfamily. Energy-coupling factor EcfA family. In terms of assembly, forms a stable energy-coupling factor (ECF) transporter complex composed of 2 membrane-embedded substrate-binding proteins (S component), 2 ATP-binding proteins (A component) and 2 transmembrane proteins (T component).

The protein localises to the cell membrane. Its function is as follows. ATP-binding (A) component of a common energy-coupling factor (ECF) ABC-transporter complex. Unlike classic ABC transporters this ECF transporter provides the energy necessary to transport a number of different substrates. This Lactiplantibacillus plantarum (strain ATCC BAA-793 / NCIMB 8826 / WCFS1) (Lactobacillus plantarum) protein is Energy-coupling factor transporter ATP-binding protein EcfA2.